We begin with the raw amino-acid sequence, 511 residues long: Ribosome biogenesis protein YTM1 (511 aa).

The segment at 9-112 is ubiquitin-like (UBL) domain; sequence VKVVFVTRDE…EVSLSIEYIR (104 aa). The interval 122–511 is sufficient for interaction with ERB1 and association with 66S pre-ribosomes; the sequence is SFSNPDWVAA…IQINNNPQSA (390 aa). WD repeat units lie at residues 124-168, 170-208, 248-287, 332-372, 383-423, 429-470, and 477-511; these read SNPD…TGQL, GHNS…YRRK, GHTA…MPAI, GHSA…AVQS, TRST…QVAT, GHTN…SLHV, and TENN…PQSA. The tract at residues 207–228 is disordered; sequence RKEPGQVGKKELNYDSEEDSDE. Positions 208–219 are enriched in basic and acidic residues; that stretch reads KEPGQVGKKELN.

Belongs to the WD repeat WDR12/YTM1 family. As to quaternary structure, component of the NOP7 complex, composed of ERB1, NOP7 and YTM1. The complex is held together by ERB1, which interacts with NOP7 via its N-terminal domain and with YTM1 via a high-affinity interaction between the seven-bladed beta-propeller domains of the 2 proteins. The NOP7 complex associates with the 66S pre-ribosome. Interacts (via UBL domain) with MDN1 (via VWFA/MIDAS domain).

It is found in the nucleus. It localises to the nucleolus. Its subcellular location is the nucleoplasm. Component of the NOP7 complex, which is required for maturation of the 25S and 5.8S ribosomal RNAs and formation of the 60S ribosome. In Yarrowia lipolytica (strain CLIB 122 / E 150) (Yeast), this protein is Ribosome biogenesis protein YTM1.